We begin with the raw amino-acid sequence, 282 residues long: Pantothenate synthetase (282 aa).

30–37 (MGYLHEGH) lines the ATP pocket. H37 serves as the catalytic Proton donor. A (R)-pantoate-binding site is contributed by Q61. Residue Q61 coordinates beta-alanine. 147-150 (GEKD) is a binding site for ATP. Q153 is a binding site for (R)-pantoate. ATP is bound by residues I176 and 184 to 187 (KSSR).

The protein belongs to the pantothenate synthetase family. In terms of assembly, homodimer.

The protein localises to the cytoplasm. It carries out the reaction (R)-pantoate + beta-alanine + ATP = (R)-pantothenate + AMP + diphosphate + H(+). It functions in the pathway cofactor biosynthesis; (R)-pantothenate biosynthesis; (R)-pantothenate from (R)-pantoate and beta-alanine: step 1/1. In terms of biological role, catalyzes the condensation of pantoate with beta-alanine in an ATP-dependent reaction via a pantoyl-adenylate intermediate. The polypeptide is Pantothenate synthetase (Enterococcus faecalis (strain ATCC 700802 / V583)).